A 481-amino-acid polypeptide reads, in one-letter code: Keratin, type II cuticular Hb1 (481 aa).

Residues 1–106 are head; the sequence is MTCGSGFCGR…PNAQCVKHEE (106 aa). Residues 106-417 form the IF rod domain; that stretch reads EKEQIKCLNS…RLLEGEEQRL (312 aa). Residues 107–141 are coil 1A; it reads KEQIKCLNSKFAAFIDKVRFLEQQNKLLETKWQFY. The segment at 142–151 is linker 1; it reads QNRKCCESNM. The tract at residues 152 to 252 is coil 1B; the sequence is EPLFEGYIEA…YDEETRILHS (101 aa). K212 participates in a covalent cross-link: Glycyl lysine isopeptide (Lys-Gly) (interchain with G-Cter in SUMO1). Residues 253–269 are linker 12; that stretch reads HISDTSIVVKMDNSRDL. The interval 270–413 is coil 2; it reads NMDCVVAEIK…TTYRRLLEGE (144 aa). A tail region spans residues 414–481; that stretch reads EQRLCEGVGA…GSAVSCGRKC (68 aa).

It belongs to the intermediate filament family. As to quaternary structure, heterotetramer of two type I and two type II keratins. Expressed in dorsal skin.

This is Keratin, type II cuticular Hb1 from Mus musculus (Mouse).